The following is a 474-amino-acid chain: tRNA-2-methylthio-N(6)-dimethylallyladenosine synthase (474 aa).

Residues 3–120 form the MTTase N-terminal domain; that stretch reads KKLHIKTWGC…LPEMINSVRG (118 aa). [4Fe-4S] cluster contacts are provided by Cys-12, Cys-49, Cys-83, Cys-157, Cys-161, and Cys-164. One can recognise a Radical SAM core domain in the interval 143–375; the sequence is RAEGPTAFVS…QERINQQAMA (233 aa). Residues 378-441 enclose the TRAM domain; it reads RRMLGTTQRI…PNSLRGKVVR (64 aa).

This sequence belongs to the methylthiotransferase family. MiaB subfamily. Monomer. It depends on [4Fe-4S] cluster as a cofactor.

The protein localises to the cytoplasm. The enzyme catalyses N(6)-dimethylallyladenosine(37) in tRNA + (sulfur carrier)-SH + AH2 + 2 S-adenosyl-L-methionine = 2-methylsulfanyl-N(6)-dimethylallyladenosine(37) in tRNA + (sulfur carrier)-H + 5'-deoxyadenosine + L-methionine + A + S-adenosyl-L-homocysteine + 2 H(+). Functionally, catalyzes the methylthiolation of N6-(dimethylallyl)adenosine (i(6)A), leading to the formation of 2-methylthio-N6-(dimethylallyl)adenosine (ms(2)i(6)A) at position 37 in tRNAs that read codons beginning with uridine. This is tRNA-2-methylthio-N(6)-dimethylallyladenosine synthase from Escherichia coli (strain SE11).